The sequence spans 393 residues: Sister chromatid cohesion protein DCC1 (393 aa).

The protein belongs to the DCC1 family. Component of the CTF18-RFC complex which consists of CTF8, CTF18, DSCC1 and the RFC complex. Interacts with CTF8 and CTF18. Interacts with DDX11.

The protein localises to the nucleus. Its function is as follows. Loads PCNA onto primed templates regulating velocity, spacing and restart activity of replication forks. May couple DNA replication to sister chromatid cohesion through regulation of the acetylation of the cohesin subunit SMC3. This Homo sapiens (Human) protein is Sister chromatid cohesion protein DCC1 (DSCC1).